Here is a 191-residue protein sequence, read N- to C-terminus: Inosine triphosphate pyrophosphatase (191 aa).

12–17 is an ITP binding site; it reads TGNKNK. A Mg(2+)-binding site is contributed by Glu-40. ITP contacts are provided by residues Lys-52, 68-69, Lys-85, 144-147, Lys-167, and 172-173; these read DS, FGWE, and HR.

It belongs to the HAM1 NTPase family. Homodimer. Mg(2+) is required as a cofactor. Requires Mn(2+) as cofactor.

The protein resides in the cytoplasm. The protein localises to the nucleus. The enzyme catalyses ITP + H2O = IMP + diphosphate + H(+). The catalysed reaction is dITP + H2O = dIMP + diphosphate + H(+). It carries out the reaction XTP + H2O = XMP + diphosphate + H(+). Pyrophosphatase that hydrolyzes non-canonical purine nucleotides such as inosine triphosphate (ITP), deoxyinosine triphosphate (dITP) or xanthosine 5'-triphosphate (XTP) to their respective monophosphate derivatives. The enzyme does not distinguish between the deoxy- and ribose forms. Probably excludes non-canonical purines from RNA and DNA precursor pools, thus preventing their incorporation into RNA and DNA and avoiding chromosomal lesions. The protein is Inosine triphosphate pyrophosphatase of Aspergillus oryzae (strain ATCC 42149 / RIB 40) (Yellow koji mold).